The primary structure comprises 67 residues: Large ribosomal subunit protein bL31 (67 aa).

Belongs to the bacterial ribosomal protein bL31 family. Type A subfamily. In terms of assembly, part of the 50S ribosomal subunit.

Functionally, binds the 23S rRNA. This is Large ribosomal subunit protein bL31 from Finegoldia magna (strain ATCC 29328 / DSM 20472 / WAL 2508) (Peptostreptococcus magnus).